Consider the following 180-residue polypeptide: Pyruvoyl-dependent arginine decarboxylase (180 aa).

Ser-41 carries the post-translational modification Pyruvic acid (Ser).

It belongs to the PdaD family. Pyruvate serves as cofactor.

The enzyme catalyses L-arginine + H(+) = agmatine + CO2. This is Pyruvoyl-dependent arginine decarboxylase from Methanococcoides burtonii (strain DSM 6242 / NBRC 107633 / OCM 468 / ACE-M).